The primary structure comprises 292 residues: MLRIYADLTKFGIVVFSVLAGLAGYATGFQIENPFDWKIFLETLLGIYFLSSGSLALNQVQDWKIDQKMPRTAKRPIPSGKIKPAAAGILSVGLLLVGMNMLFKLEPVAGWVGLFCVFLYNGPYTLWWKRRWVFAAVPGAIPGALPVTIGYAVANPDIFNSESLYLFLIMFLWQMPHFWVLAIRYKDDYAAGGIPTLPVALGMEKTMFQVGLYTLVYVGVALAAPMFVHASWMFVLLTFPFVFKVLQEFYRYYKSNGTERWLAFFMWLNVSMLVFIIIPVIDKWNFLFIHHN.

Transmembrane regions (helical) follow at residues 11–31, 37–57, 85–105, 108–128, 133–153, 163–183, 199–219, 223–243, and 261–281; these read FGIVVFSVLAGLAGYATGFQI, WKIFLETLLGIYFLSSGSLAL, AAAGILSVGLLLVGMNMLFKL, VAGWVGLFCVFLYNGPYTLWW, VFAAVPGAIPGALPVTIGYAV, SLYLFLIMFLWQMPHFWVLAI, VALGMEKTMFQVGLYTLVYVG, AAPMFVHASWMFVLLTFPFVF, and WLAFFMWLNVSMLVFIIIPVI.

This sequence belongs to the UbiA prenyltransferase family. Protoheme IX farnesyltransferase subfamily.

The protein resides in the cell inner membrane. It catalyses the reaction heme b + (2E,6E)-farnesyl diphosphate + H2O = Fe(II)-heme o + diphosphate. The protein operates within porphyrin-containing compound metabolism; heme O biosynthesis; heme O from protoheme: step 1/1. In terms of biological role, converts heme B (protoheme IX) to heme O by substitution of the vinyl group on carbon 2 of heme B porphyrin ring with a hydroxyethyl farnesyl side group. The sequence is that of Protoheme IX farnesyltransferase from Bdellovibrio bacteriovorus (strain ATCC 15356 / DSM 50701 / NCIMB 9529 / HD100).